We begin with the raw amino-acid sequence, 305 residues long: Dihydroorotate dehydrogenase B (NAD(+)), catalytic subunit (305 aa).

FMN-binding positions include serine 23 and 47–48 (KG). Substrate is bound by residues lysine 47 and 71–75 (NAIGL). 2 residues coordinate FMN: asparagine 101 and asparagine 129. Asparagine 129 is a substrate binding site. Catalysis depends on cysteine 132, which acts as the Nucleophile. Positions 167 and 193 each coordinate FMN. 194–195 (NT) is a binding site for substrate. FMN-binding positions include glycine 219, 245–246 (GG), and 267–268 (GT).

Belongs to the dihydroorotate dehydrogenase family. Type 1 subfamily. In terms of assembly, heterotetramer of 2 PyrK and 2 PyrD type B subunits. The cofactor is FMN.

The protein localises to the cytoplasm. The enzyme catalyses (S)-dihydroorotate + NAD(+) = orotate + NADH + H(+). The protein operates within pyrimidine metabolism; UMP biosynthesis via de novo pathway; orotate from (S)-dihydroorotate (NAD(+) route): step 1/1. Its function is as follows. Catalyzes the conversion of dihydroorotate to orotate with NAD(+) as electron acceptor. This Geotalea uraniireducens (strain Rf4) (Geobacter uraniireducens) protein is Dihydroorotate dehydrogenase B (NAD(+)), catalytic subunit (pyrD).